Here is a 561-residue protein sequence, read N- to C-terminus: Nucleoprotein (561 aa).

The segment at 52 to 237 is binding site for the cap structure m7GTP; it reads VRKDKRTDSD…ISHEPSALNI (186 aa). The interval 336-355 is disordered; sequence SKPSAIQPPVRNGGSPDLKQ. 2 residues coordinate Mn(2+): Asp380 and Glu382. The Zn(2+) site is built by Glu390, Cys497, His500, and Cys521. Mn(2+) is bound at residue Asp525.

This sequence belongs to the arenaviridae nucleocapsid protein family. As to quaternary structure, homomultimerizes to form the nucleocapsid. Binds to viral genomic RNA. Interacts with glycoprotein G2. Interacts with protein Z; this interaction probably directs the encapsidated genome to budding sites. Interacts with protein L; this interaction does not interfere with Z-L interaction. Interacts with host IKBKE (via Protein kinase domain); the interaction inhibits IKBKE kinase activity.

It is found in the virion. It localises to the host cytoplasm. Functionally, encapsidates the genome, protecting it from nucleases. The encapsidated genomic RNA is termed the nucleocapsid (NC). Serves as template for viral transcription and replication. The increased presence of protein N in host cell does not seem to trigger the switch from transcription to replication as observed in other negative strain RNA viruses. Through the interaction with host IKBKE, strongly inhibits the phosphorylation and nuclear translocation of host IRF3, a protein involved in interferon activation pathway, leading to the inhibition of interferon-beta and IRF3-dependent promoters activation. Also encodes a functional 3'-5' exoribonuclease that degrades preferentially dsRNA substrates and thereby participates in the suppression of interferon induction. The sequence is that of Nucleoprotein from Cavia cutleri (Guinea pig).